Here is a 1604-residue protein sequence, read N- to C-terminus: Chromatin-remodeling ATPase INO80 (1604 aa).

Residues 1 to 16 show a composition bias toward basic and acidic residues; it reads MDPSRETFDGSTRDSY. Disordered stretches follow at residues 1–38, 174–201, 266–285, 297–316, and 406–620; these read MDPS…RIPY, RPDA…SETP, PPAQ…HNRR, NSVV…EVVS, and EEKK…KTVE. Positions 28–38 are enriched in polar residues; that stretch reads SELNTQNRIPY. At threonine 179 the chain carries Phosphothreonine. Positions 271 to 281 are enriched in polar residues; it reads LSPNSSQSQIT. Basic and acidic residues predominate over residues 406-429; it reads EEKKKKEREEQVRLLQESADKDAE. Residues 457–470 show a composition bias toward polar residues; the sequence is TANSQATENNNTPS. Composition is skewed to basic and acidic residues over residues 474–490 and 497–506; these read VKAE…DKSR and TNKDSEKNDN. Polar residues-rich tracts occupy residues 507-526 and 543-553; these read NDAS…SPET and ANDTSKNANGE. Serine 518 bears the Phosphoserine mark. Basic residues predominate over residues 557 to 566; the sequence is TPKKSKKKTS. 2 stretches are compositionally biased toward polar residues: residues 568-577 and 585-597; these read AQQEANSTTA and GDST…TNKE. Positions 626-751 constitute a DBINO domain; the sequence is VIKEIARKEI…SHFVGRKMDR (126 aa). The segment at 792–820 is disordered; that stretch reads AREHSQLFDANRQQSPNNSSSDMNEGEMN. The segment covering 802-820 has biased composition (polar residues); that stretch reads NRQQSPNNSSSDMNEGEMN. The 173-residue stretch at 854–1026 folds into the Helicase ATP-binding domain; it reads ANLYEQGING…WALLHFIMPS (173 aa). 867 to 874 contributes to the ATP binding site; the sequence is DEMGLGKT. The DEAQ box motif lies at 977–980; that stretch reads DEAQ. The region spanning 1433–1591 is the Helicase C-terminal domain; the sequence is KLDKLLVELK…TRPTKQMDLK (159 aa).

This sequence belongs to the SNF2/RAD54 helicase family. As to quaternary structure, component of the INO80 chromatin-remodeling complex.

The protein localises to the nucleus. The enzyme catalyses ATP + H2O = ADP + phosphate + H(+). ATPase component of the INO80 complex which remodels chromatin by shifting nucleosomes and is involved in DNA repair. This Schizosaccharomyces pombe (strain 972 / ATCC 24843) (Fission yeast) protein is Chromatin-remodeling ATPase INO80 (ino80).